The following is a 474-amino-acid chain: Tubulin gamma-1 chain (474 aa).

142–148 (AGGTGSG) is a GTP binding site.

This sequence belongs to the tubulin family. In terms of assembly, gamma-tubulin complex is composed of gamma-tubulin and GCP proteins.

The protein localises to the cytoplasm. The protein resides in the cytoskeleton. It is found in the microtubule organizing center. Its subcellular location is the nucleus. It localises to the cell cortex. Its function is as follows. Tubulin is the major constituent of microtubules. The gamma chain is found at microtubule organizing centers (MTOC) such as the spindle poles, suggesting that it is involved in the minus-end nucleation of microtubule assembly. In terms of biological role, gamma-tubulin complex is essential for the control of microtubular network remodeling in the course of initiation and development of giant-feeding cells, and for the successful reproduction of nematodes (e.g. Meloidogyne spp.) in their plant hosts. In Arabidopsis thaliana (Mouse-ear cress), this protein is Tubulin gamma-1 chain (TUBG1).